The sequence spans 207 residues: MLSVILKESVRNLGKAGVVTKVKPGYARYLLAQKKAVRATKENLKILEEQHISIQQENLEKLEAAKALQVSLKDEFLIIIRQAADDGKLFGSVTPKCISKLLSDKGYNIHYHNIFFHSVIKYIGEYVVNLELHHDLVVPMMLYVVKNDLGAMQAQKLHLDKQKKEEKAKDEVSATEKDEELMLSSVTNDNDGDGAKEIVVEGTEESQ.

The segment covering Gln-162 to Glu-176 has biased composition (basic and acidic residues). Residues Gln-162–Gln-207 form a disordered region.

Belongs to the bacterial ribosomal protein bL9 family.

Binds to the 23S rRNA. This Ehrlichia ruminantium (strain Gardel) protein is Large ribosomal subunit protein bL9.